The following is a 919-amino-acid chain: UPF0182 protein SUN_1015 (919 aa).

7 helical membrane passes run 8–28 (IIIT…VDYY), 51–71 (ILSF…HIHF), 102–122 (AVAW…GSYA), 158–178 (VYQF…IGVL), 207–227 (LTAF…YNIL), 246–266 (IPAY…LFFY), and 274–294 (VIVS…WIYP).

This sequence belongs to the UPF0182 family.

The protein resides in the cell membrane. The chain is UPF0182 protein SUN_1015 from Sulfurovum sp. (strain NBC37-1).